A 412-amino-acid polypeptide reads, in one-letter code: Imidazolonepropionase (412 aa).

Positions 73 and 75 each coordinate Fe(3+). Positions 73 and 75 each coordinate Zn(2+). Arg82, Tyr145, and His178 together coordinate 4-imidazolone-5-propanoate. Tyr145 is a binding site for N-formimidoyl-L-glutamate. A Fe(3+)-binding site is contributed by His247. His247 serves as a coordination point for Zn(2+). 4-imidazolone-5-propanoate is bound at residue Gln250. Asp322 lines the Fe(3+) pocket. Asp322 serves as a coordination point for Zn(2+). Residues Asn324 and Gly326 each coordinate N-formimidoyl-L-glutamate. Residue Ser327 participates in 4-imidazolone-5-propanoate binding.

The protein belongs to the metallo-dependent hydrolases superfamily. HutI family. Zn(2+) is required as a cofactor. Fe(3+) serves as cofactor.

It is found in the cytoplasm. It catalyses the reaction 4-imidazolone-5-propanoate + H2O = N-formimidoyl-L-glutamate. The protein operates within amino-acid degradation; L-histidine degradation into L-glutamate; N-formimidoyl-L-glutamate from L-histidine: step 3/3. Catalyzes the hydrolytic cleavage of the carbon-nitrogen bond in imidazolone-5-propanoate to yield N-formimidoyl-L-glutamate. It is the third step in the universal histidine degradation pathway. This Shewanella amazonensis (strain ATCC BAA-1098 / SB2B) protein is Imidazolonepropionase.